Consider the following 506-residue polypeptide: Lysine--tRNA ligase (506 aa).

2 residues coordinate Mg(2+): Glu416 and Glu423.

It belongs to the class-II aminoacyl-tRNA synthetase family. Homodimer. Mg(2+) is required as a cofactor.

It localises to the cytoplasm. The enzyme catalyses tRNA(Lys) + L-lysine + ATP = L-lysyl-tRNA(Lys) + AMP + diphosphate. The chain is Lysine--tRNA ligase from Bordetella bronchiseptica (strain ATCC BAA-588 / NCTC 13252 / RB50) (Alcaligenes bronchisepticus).